A 260-amino-acid chain; its full sequence is ATP-dependent zinc metalloprotease FTSH, chloroplastic (260 aa).

Position 219 (His-219) interacts with Zn(2+). Residue Glu-220 is part of the active site. His-223 is a Zn(2+) binding site.

In the N-terminal section; belongs to the AAA ATPase family. It in the C-terminal section; belongs to the peptidase M41 family. Requires Zn(2+) as cofactor.

It is found in the plastid. The protein localises to the chloroplast thylakoid membrane. In terms of biological role, probable ATP-dependent zinc metallopeptidase. This Helianthus annuus (Common sunflower) protein is ATP-dependent zinc metalloprotease FTSH, chloroplastic.